Reading from the N-terminus, the 330-residue chain is Exostosin-like 2 (330 aa).

Topologically, residues 1–22 (MRCCHICKLPGRVMGIRVLRLS) are cytoplasmic. Residues 23 to 43 (LVVILVLLLVAGALTALLPSV) form a helical; Signal-anchor for type II membrane protein membrane-spanning segment. Residues 44–330 (KEDKMLMLRR…FPYANYKRKI (287 aa)) are Lumenal-facing. Q71 lines the UDP-N-acetyl-alpha-D-galactosamine pocket. Q71 contributes to the UDP-N-acetyl-alpha-D-glucosamine binding site. N-linked (GlcNAc...) asparagine glycosylation occurs at N74. Positions 75, 100, 129, 134, 150, 151, 152, and 244 each coordinate UDP-N-acetyl-alpha-D-galactosamine. Residues R75, N100, N129, R134, D150, D151, D152, D244, D245, and R293 each coordinate UDP-N-acetyl-alpha-D-glucosamine. D152 serves as a coordination point for Mn(2+). A disulfide bridge connects residues C243 and C296. D245 is an active-site residue. R293 contributes to the UDP-N-acetyl-alpha-D-galactosamine binding site.

This sequence belongs to the glycosyltransferase 47 family. Mn(2+) serves as cofactor. In terms of processing, the soluble form derives from the membrane form by proteolytic processing. In terms of tissue distribution, ubiquitous.

It localises to the endoplasmic reticulum membrane. Its subcellular location is the secreted. It carries out the reaction 3-O-(beta-D-GlcA-(1-&gt;3)-beta-D-Gal-(1-&gt;3)-beta-D-Gal-(1-&gt;4)-beta-D-Xyl)-L-seryl-[protein] + UDP-N-acetyl-alpha-D-glucosamine = 3-O-(alpha-D-GlcNAc-(1-&gt;4)-beta-D-GlcA-(1-&gt;3)-beta-D-Gal-(1-&gt;3)-beta-D-Gal-(1-&gt;4)-beta-D-Xyl)-L-seryl-[protein] + UDP + H(+). Its pathway is glycan metabolism; heparan sulfate biosynthesis. Its function is as follows. Glycosyltransferase required for the biosynthesis of heparan-sulfate and responsible for the alternating addition of beta-1-4-linked glucuronic acid (GlcA) and alpha-1-4-linked N-acetylglucosamine (GlcNAc) units to nascent heparan sulfate chains. This is Exostosin-like 2 (EXTL2) from Homo sapiens (Human).